Here is a 401-residue protein sequence, read N- to C-terminus: 1-deoxy-D-xylulose 5-phosphate reductoisomerase (401 aa).

Residues Thr10, Gly11, Ser12, Ile13, Gly36, Asn38, and Asn124 each coordinate NADPH. Lys125 contributes to the 1-deoxy-D-xylulose 5-phosphate binding site. Glu126 contacts NADPH. Asp150 is a Mn(2+) binding site. 4 residues coordinate 1-deoxy-D-xylulose 5-phosphate: Ser151, Glu152, Ser186, and His209. Glu152 contributes to the Mn(2+) binding site. An NADPH-binding site is contributed by Gly215. Residues Ser222, Asn227, Lys228, and Glu231 each contribute to the 1-deoxy-D-xylulose 5-phosphate site. Glu231 contributes to the Mn(2+) binding site.

It belongs to the DXR family. Mg(2+) serves as cofactor. It depends on Mn(2+) as a cofactor.

The catalysed reaction is 2-C-methyl-D-erythritol 4-phosphate + NADP(+) = 1-deoxy-D-xylulose 5-phosphate + NADPH + H(+). It participates in isoprenoid biosynthesis; isopentenyl diphosphate biosynthesis via DXP pathway; isopentenyl diphosphate from 1-deoxy-D-xylulose 5-phosphate: step 1/6. Functionally, catalyzes the NADPH-dependent rearrangement and reduction of 1-deoxy-D-xylulose-5-phosphate (DXP) to 2-C-methyl-D-erythritol 4-phosphate (MEP). This is 1-deoxy-D-xylulose 5-phosphate reductoisomerase from Vibrio parahaemolyticus serotype O3:K6 (strain RIMD 2210633).